The following is a 142-amino-acid chain: Ribosome maturation factor RimP (142 aa).

The protein belongs to the RimP family.

It localises to the cytoplasm. Its function is as follows. Required for maturation of 30S ribosomal subunits. This chain is Ribosome maturation factor RimP, found in Wolinella succinogenes (strain ATCC 29543 / DSM 1740 / CCUG 13145 / JCM 31913 / LMG 7466 / NCTC 11488 / FDC 602W) (Vibrio succinogenes).